The following is a 90-amino-acid chain: CRISPR-associated endonuclease Cas2 2 (90 aa).

Mg(2+) is bound at residue Asp-11.

It belongs to the CRISPR-associated endoribonuclease Cas2 protein family. As to quaternary structure, homodimer, forms a heterotetramer with a Cas1 homodimer. Requires Mn(2+) as cofactor. It depends on Mg(2+) as a cofactor.

Its activity is regulated as follows. Inhibited by EDTA and at pH 6.0. Functionally, CRISPR (clustered regularly interspaced short palindromic repeat), is an adaptive immune system that provides protection against mobile genetic elements (viruses, transposable elements and conjugative plasmids). CRISPR clusters contain sequences complementary to antecedent mobile elements and target invading nucleic acids. CRISPR clusters are transcribed and processed into CRISPR RNA (crRNA). Involved in the integration of spacer DNA into the CRISPR cassette. Functions as a dsDNA endonuclease and as a weak ssRNase. This Thermus thermophilus (strain ATCC BAA-163 / DSM 7039 / HB27) protein is CRISPR-associated endonuclease Cas2 2 (cas2b).